The following is a 590-amino-acid chain: Probable metalloendopeptidase G1-type (590 aa).

Histidine 41 provides a ligand contact to Zn(2+). Glutamate 44 is a catalytic residue. Position 45 (histidine 45) interacts with Zn(2+).

Belongs to the peptidase M44 family. It depends on Zn(2+) as a cofactor.

Functionally, seems to be involved in viral proteins maturation by cleavage at Ala-Gly-|-Xaa motifs. This chain is Probable metalloendopeptidase G1-type, found in Oryctolagus cuniculus (Rabbit).